We begin with the raw amino-acid sequence, 320 residues long: Olfactory receptor 5C1 (320 aa).

Residues 1–29 (MNSENLTRAAVAPAEFVLLGITNRWDLRV) lie on the Extracellular side of the membrane. The N-linked (GlcNAc...) asparagine glycan is linked to asparagine 5. The chain crosses the membrane as a helical span at residues 30–50 (ALFLTCLPVYLVSLLGNMGMA). Residues 51 to 58 (LLIRMDAR) lie on the Cytoplasmic side of the membrane. The chain crosses the membrane as a helical span at residues 59-79 (LHTPMYFFLANLSLLDACYSS). The Extracellular portion of the chain corresponds to 80 to 103 (AIGPKMLVDLLLPRATIPYTACAL). An intrachain disulfide couples cysteine 101 to cysteine 193. A helical transmembrane segment spans residues 104–124 (QMFVFAGLADTECCLLAAMAY). The Cytoplasmic segment spans residues 125 to 143 (DRYVAIRNPLLYTTAMSQR). Residues 144 to 164 (LCLALLGASGLGGAVSAFVHT) form a helical membrane-spanning segment. Over 165–200 (TLTFRLSFCRSRKINSFFCDIPPLLAISCSDTSLNE) the chain is Extracellular. A helical transmembrane segment spans residues 201–221 (LLLFAICGFIQTATVLAITVS). Residues 222-241 (YGFIAGAVIHMRSVEGSRRA) lie on the Cytoplasmic side of the membrane. A helical membrane pass occupies residues 242 to 262 (ASTGGSHLTAVAMMYGTLIFM). Residues 263–275 (YLRPSSSYALDTD) lie on the Extracellular side of the membrane. A helical membrane pass occupies residues 276–296 (KMASVFYTLVIPSLNPLIYSL). Topologically, residues 297–320 (RNKEVKEALRQTWSRFHCPGQGSQ) are cytoplasmic.

Belongs to the G-protein coupled receptor 1 family.

Its subcellular location is the cell membrane. Its function is as follows. Odorant receptor. In Homo sapiens (Human), this protein is Olfactory receptor 5C1 (OR5C1).